The chain runs to 411 residues: Bifunctional protein GlmU (411 aa).

The interval M1–N204 is pyrophosphorylase. UTP contacts are provided by residues L6 to G9, Q74, and G79. N-acetyl-alpha-D-glucosamine 1-phosphate contacts are provided by T80, G130, N142, and N158. The tract at residues G205–L224 is linker. Residues N225 to N411 are N-acetyltransferase. H308 serves as the catalytic Proton acceptor. Acetyl-CoA-binding residues include A384 and K401.

The protein in the N-terminal section; belongs to the N-acetylglucosamine-1-phosphate uridyltransferase family. It in the C-terminal section; belongs to the transferase hexapeptide repeat family.

It carries out the reaction N-acetyl-alpha-D-glucosamine 1-phosphate + UTP + H(+) = UDP-N-acetyl-alpha-D-glucosamine + diphosphate. The catalysed reaction is alpha-D-glucosamine 1-phosphate + acetyl-CoA = N-acetyl-alpha-D-glucosamine 1-phosphate + CoA + H(+). The protein operates within nucleotide-sugar biosynthesis; UDP-N-acetyl-alpha-D-glucosamine biosynthesis; N-acetyl-alpha-D-glucosamine 1-phosphate from alpha-D-glucosamine 6-phosphate (route II): step 2/2. It participates in nucleotide-sugar biosynthesis; UDP-N-acetyl-alpha-D-glucosamine biosynthesis; UDP-N-acetyl-alpha-D-glucosamine from N-acetyl-alpha-D-glucosamine 1-phosphate: step 1/1. Catalyzes the last two sequential reactions in the de novo biosynthetic pathway for UDP-N-acetyl-glucosamine (UDP-GlcNAc). Responsible for the acetylation of GlcN-1-P to GlcNAc-1-P, and for the uridyl transfer from UTP to GlcNAc-1-P, to produce UDP-GlcNAc and pyrophosphate. This Methanococcus maripaludis (strain C5 / ATCC BAA-1333) protein is Bifunctional protein GlmU.